The sequence spans 82 residues: Capsid protein G8P (82 aa).

A signal peptide spans 1 to 28; the sequence is MKAMKQRIAKFSPVASFRNLCIAGSVTA. Topologically, residues 29–57 are periplasmic; that stretch reads ATSLPAFAGVIDTSAVESAITDGQGDMKA. A helical transmembrane segment spans residues 58–78; that stretch reads IGGYIVGALVILAVAGLIYSM. The Cytoplasmic portion of the chain corresponds to 79–82; it reads LRKA.

It belongs to the inovirus capsid protein family. Homomultimerizes. There are several thousands of this protein in the phage capsid.

It localises to the virion. The protein resides in the host membrane. Self assembles to form a helical capsid wrapping up the viral genomic DNA. The capsid displays a filamentous structure with a length of 760-1950 nm and a width of 6-8 nm. The virion assembly and budding take place at the host inner membrane. The protein is Capsid protein G8P (VIII) of Pseudomonas phage Pf1 (Bacteriophage Pf1).